The primary structure comprises 616 residues: uncharacterized protein (616 aa).

Disordered regions lie at residues 166 to 243 (SRTY…TPEL) and 272 to 298 (DHEE…IEEI). Positions 184–200 (RVDESRPSENSSRHDYV) are enriched in basic and acidic residues. Residues 221-237 (TRTSNVTQTQPPTNQVF) are compositionally biased toward polar residues. Acidic residues predominate over residues 272–287 (DHEEEEGQDDDEETEI). A Ubiquitin-like domain is found at 343–417 (ILIKLKFMND…VHCHISTTPY (75 aa)).

This is an uncharacterized protein from Caenorhabditis elegans.